The sequence spans 1390 residues: ABC transporter G family member 43 (1390 aa).

Residues 1–22 (MTMPQTDGVEFASRNNLENGDG) form a disordered region. The region spanning 137–411 (SKLSRFTFSK…FEDCGFKCPQ (275 aa)) is the ABC transporter 1 domain. 171 to 178 (GPPGCGKT) is an ATP binding site. Positions 489–701 (DMFKACSRRE…AEIGLTSNEF (213 aa)) constitute an ABC transmembrane type-2 1 domain. Helical transmembrane passes span 507–527 (FVYV…MTVY), 541–561 (YLLG…LPEL), 594–614 (IPIS…VIGY), 626–646 (LILF…GAVF), 651–671 (VATT…GFIV), and 737–757 (FGAL…ALTF). In terms of domain architecture, ABC transporter 2 spans 798–1043 (FTFQDVQYFI…VIEYFMSIPG (246 aa)). 835-842 (GVSGAGKT) is an ATP binding site. Residues 1115–1329 (EQFKACLWKQ…VLNGLLTSQY (215 aa)) enclose the ABC transmembrane type-2 2 domain. The next 7 helical transmembrane spans lie at 1134 to 1154 (YNLT…ILFL), 1173 to 1193 (MFTV…FCVA), 1218 to 1238 (VLVE…IVYP), 1253 to 1273 (FYSI…LVVV), 1279 to 1299 (IAFT…GYVM), 1307 to 1327 (WWIW…LLTS), and 1362 to 1382 (LVAV…AFFI).

It belongs to the ABC transporter superfamily. ABCG family. PDR (TC 3.A.1.205) subfamily.

The protein resides in the membrane. In terms of biological role, may be a general defense protein. The polypeptide is ABC transporter G family member 43 (ABCG43) (Arabidopsis thaliana (Mouse-ear cress)).